The primary structure comprises 386 residues: Methylthioribose-1-phosphate isomerase (386 aa).

Catalysis depends on Asp-258, which acts as the Proton donor.

The protein belongs to the eIF-2B alpha/beta/delta subunits family. MtnA subfamily.

It localises to the cytoplasm. Its subcellular location is the nucleus. The catalysed reaction is 5-(methylsulfanyl)-alpha-D-ribose 1-phosphate = 5-(methylsulfanyl)-D-ribulose 1-phosphate. The protein operates within amino-acid biosynthesis; L-methionine biosynthesis via salvage pathway; L-methionine from S-methyl-5-thio-alpha-D-ribose 1-phosphate: step 1/6. Functionally, catalyzes the interconversion of methylthioribose-1-phosphate (MTR-1-P) into methylthioribulose-1-phosphate (MTRu-1-P). The chain is Methylthioribose-1-phosphate isomerase from Uncinocarpus reesii (strain UAMH 1704).